A 490-amino-acid chain; its full sequence is Chromosomal replication initiator protein DnaA (490 aa).

A domain I, interacts with DnaA modulators region spans residues 1 to 75 (MAVSSDAEQK…SELWKQEDAD (75 aa)). The tract at residues 75–145 (DLLKIEIVVR…SEFRHNVLGS (71 aa)) is domain II. The domain III, AAA+ region stretch occupies residues 146–368 (PLDPRYTFGS…GAFNQLLFRQ (223 aa)). ATP is bound by residues glycine 192, glycine 194, lysine 195, and threonine 196. The domain IV, binds dsDNA stretch occupies residues 369-490 (SFEPQITIDR…LLRRLINDQA (122 aa)).

Belongs to the DnaA family. Oligomerizes as a right-handed, spiral filament on DNA at oriC.

It is found in the cytoplasm. Functionally, plays an essential role in the initiation and regulation of chromosomal replication. ATP-DnaA binds to the origin of replication (oriC) to initiate formation of the DNA replication initiation complex once per cell cycle. Binds the DnaA box (a 9 base pair repeat at the origin) and separates the double-stranded (ds)DNA. Forms a right-handed helical filament on oriC DNA; dsDNA binds to the exterior of the filament while single-stranded (ss)DNA is stabiized in the filament's interior. The ATP-DnaA-oriC complex binds and stabilizes one strand of the AT-rich DNA unwinding element (DUE), permitting loading of DNA polymerase. After initiation quickly degrades to an ADP-DnaA complex that is not apt for DNA replication. Binds acidic phospholipids. The protein is Chromosomal replication initiator protein DnaA of Mesorhizobium japonicum (strain LMG 29417 / CECT 9101 / MAFF 303099) (Mesorhizobium loti (strain MAFF 303099)).